Consider the following 455-residue polypeptide: Chromosomal replication initiator protein DnaA (455 aa).

The tract at residues 1-75 is domain I, interacts with DnaA modulators; sequence MLERNDLWNL…AMQATNEQIR (75 aa). Residues 75–117 form a domain II region; sequence RPVMITEEERQQLTRDKDSQVTTGNVAGQQPTTATTPTFMRET. A compositionally biased stretch (basic and acidic residues) spans 84–93; sequence RQQLTRDKDS. Positions 84–107 are disordered; that stretch reads RQQLTRDKDSQVTTGNVAGQQPTT. Residues 118–334 are domain III, AAA+ region; it reads KLNPKYTFDT…GALARVQAYS (217 aa). Glycine 162, glycine 164, lysine 165, and threonine 166 together coordinate ATP. Residues 335 to 455 are domain IV, binds dsDNA; sequence RLNNSPITTS…VGDLTGQLKS (121 aa).

It belongs to the DnaA family. As to quaternary structure, oligomerizes as a right-handed, spiral filament on DNA at oriC.

The protein localises to the cytoplasm. Its function is as follows. Plays an essential role in the initiation and regulation of chromosomal replication. ATP-DnaA binds to the origin of replication (oriC) to initiate formation of the DNA replication initiation complex once per cell cycle. Binds the DnaA box (a 9 base pair repeat at the origin) and separates the double-stranded (ds)DNA. Forms a right-handed helical filament on oriC DNA; dsDNA binds to the exterior of the filament while single-stranded (ss)DNA is stabiized in the filament's interior. The ATP-DnaA-oriC complex binds and stabilizes one strand of the AT-rich DNA unwinding element (DUE), permitting loading of DNA polymerase. After initiation quickly degrades to an ADP-DnaA complex that is not apt for DNA replication. Binds acidic phospholipids. The polypeptide is Chromosomal replication initiator protein DnaA (Lactiplantibacillus plantarum (strain ATCC BAA-793 / NCIMB 8826 / WCFS1) (Lactobacillus plantarum)).